Reading from the N-terminus, the 301-residue chain is Haloalkane dehalogenase (301 aa).

Asp123 acts as the Nucleophile in catalysis. Catalysis depends on Asp250, which acts as the Proton donor. The active-site Proton acceptor is the His279.

It belongs to the haloalkane dehalogenase family. Type 1 subfamily. As to quaternary structure, monomer.

It carries out the reaction 1-haloalkane + H2O = a halide anion + a primary alcohol + H(+). Catalyzes hydrolytic cleavage of carbon-halogen bonds in halogenated aliphatic compounds, leading to the formation of the corresponding primary alcohols, halide ions and protons. This is Haloalkane dehalogenase from Phenylobacterium zucineum (strain HLK1).